Here is a 123-residue protein sequence, read N- to C-terminus: Small ribosomal subunit protein uS8 (123 aa).

This sequence belongs to the universal ribosomal protein uS8 family. Part of the 30S ribosomal subunit. Contacts proteins S5 and S12.

Functionally, one of the primary rRNA binding proteins, it binds directly to 16S rRNA central domain where it helps coordinate assembly of the platform of the 30S subunit. This chain is Small ribosomal subunit protein uS8 (rpsH), found in Carsonella ruddii (strain PV).